Reading from the N-terminus, the 275-residue chain is Membrane protein insertase YidC 2 (275 aa).

Positions 1-21 (MKKKNIILISVLLGALLLLTG) are cleaved as a signal peptide. A lipid anchor (N-palmitoyl cysteine) is attached at C22. C22 is lipidated: S-diacylglycerol cysteine. The next 4 membrane-spanning stretches (helical) occupy residues 48-68 (FVAK…TLLI), 133-153 (QMGC…YYAI), 174-194 (MVLA…SMIG), and 212-232 (IMIL…WAVG).

It belongs to the OXA1/ALB3/YidC family. Type 2 subfamily.

The protein localises to the cell membrane. In terms of biological role, required for the insertion and/or proper folding and/or complex formation of integral membrane proteins into the membrane. Involved in integration of membrane proteins that insert both dependently and independently of the Sec translocase complex, as well as at least some lipoproteins. The chain is Membrane protein insertase YidC 2 from Listeria monocytogenes serotype 4b (strain F2365).